The chain runs to 276 residues: Large ribosomal subunit protein uL2c (276 aa).

Residues A225–E276 are disordered.

It belongs to the universal ribosomal protein uL2 family. In terms of assembly, part of the 50S ribosomal subunit.

The protein localises to the plastid. It is found in the chloroplast. This Pinus koraiensis (Korean pine) protein is Large ribosomal subunit protein uL2c (rpl2).